A 1022-amino-acid chain; its full sequence is rDNA transcriptional regulator POL5 (1022 aa).

Acidic residues-rich tracts occupy residues 706-719, 728-748, and 781-802; these read EEFE…DASE, SESE…EDEA, and DLDQ…ESMD. Disordered stretches follow at residues 706-748 and 778-805; these read EEFE…EDEA and GEVD…DDEK. Serine 789 carries the phosphoserine modification.

The protein belongs to the MYBBP1A family. As to quaternary structure, interacts with FRK1.

The protein localises to the nucleus. It localises to the nucleolus. The catalysed reaction is DNA(n) + a 2'-deoxyribonucleoside 5'-triphosphate = DNA(n+1) + diphosphate. Stimulated by PCNA and inhibited by aphidicolin. Its function is as follows. Plays an important role in the regulation of rRNA transcription. Binds near or at the enhancer region of rRNA repeating units. May have DNA polymerase activity, but it is not required for in vivo function. The chain is rDNA transcriptional regulator POL5 from Saccharomyces cerevisiae (strain ATCC 204508 / S288c) (Baker's yeast).